We begin with the raw amino-acid sequence, 296 residues long: MTNPAYFPQLSQLDVSGEMESTYEDIRLTLRVPWVAFGCRVLATFPGYLPLAWRRSAEALITRYAEQAADELRERSLLNIGPLPNLKERLYAAGFDDGEIEKVRRVLYAFNYGNPKYLLLITALSESMQMRPVGGAEVSSELRASIPKGHPKGMDPLLPLVDATKASTEVQGLLKRVADLHYHHGPASDFQALANWPKVLQIVTDEVLAPVARTEQYDAKSRELVTRARELVRGLPGSAGVQRSELMSMLTPNELAGLTGVLFMYQRFIADITISIIHITECLDGAEAASKSPFPI.

It belongs to the HAD-like hydrolase superfamily. S-2-haloalkanoic acid dehalogenase family.

It carries out the reaction an (S)-2-haloacid + H2O = a (2R)-2-hydroxycarboxylate + a halide anion + H(+). It catalyses the reaction an (R)-2-haloacid + H2O = a (2S)-2-hydroxycarboxylate + a halide anion + H(+). In terms of biological role, dehalogenates both (S)- and (R)-2-haloalkanoic acids to the corresponding (R)- and (S)-hydroxyalkanoic acids, respectively, with inversion of configuration at C-2. Acts on 2-haloalkanoic acids whose carbon chain lengths are five or less. The chain is 2-haloacid dehalogenase, configuration-inverting (dhlC) from Alcaligenes xylosoxydans xylosoxydans (Achromobacter xylosoxidans).